Here is a 552-residue protein sequence, read N- to C-terminus: Putative phosphate permease MT2339 (552 aa).

The next 13 helical transmembrane spans lie at 38–58, 69–89, 107–127, 146–166, 178–198, 213–233, 326–346, 360–380, 389–409, 437–457, 472–492, 493–513, and 526–546; these read WHLSFSLLLAGSFVLFSWWAF, ILVLATVVGMFMAFNVGGNDV, ALLVAAIFEVSGAVIAGGDVT, DFMNIMLSALSAAALWLLFAN, IIGGIVGAAIALGMVSGQGGA, VSWVLSPVLGGLVSYLLYGVI, VPLVAAAGSMIIVAMLLFKGF, FIIAMVGAAVWMATFIFAKTL, TFLMFSWMQVFTASGFAFSHG, AVPAAAMVTFGVALCAGLWFI, MHPASGFAAELSAAGVVMGAT, VLGLPVSSTHILIGAVLGVGI, and IVLAWVITLPSAAILASVGLV.

This sequence belongs to the inorganic phosphate transporter (PiT) (TC 2.A.20) family.

The protein localises to the cell membrane. Functionally, potential transporter for phosphate. This chain is Putative phosphate permease MT2339, found in Mycobacterium tuberculosis (strain CDC 1551 / Oshkosh).